The chain runs to 531 residues: Acetate CoA-transferase YdiF (531 aa).

The 5-glutamyl coenzyme A thioester intermediate role is filled by Glu333.

It belongs to the 3-oxoacid CoA-transferase family. In terms of assembly, homotetramer; dimer of dimers.

It catalyses the reaction an acyl-CoA + acetate = a carboxylate + acetyl-CoA. In terms of biological role, coA transferase having broad substrate specificity for short-chain acyl-CoA thioesters with the activity decreasing when the length of the carboxylic acid chain exceeds four carbons. May play a role in short-chain fatty acid metabolism in E.coli. The chain is Acetate CoA-transferase YdiF (ydiF) from Escherichia coli (strain K12).